Here is a 272-residue protein sequence, read N- to C-terminus: Shikimate dehydrogenase (NADP(+)) (272 aa).

Shikimate-binding positions include 16-18 (SLS) and Thr-63. Residue Lys-67 is the Proton acceptor of the active site. NADP(+) is bound at residue Glu-79. Positions 88 and 103 each coordinate shikimate. NADP(+)-binding positions include 127 to 131 (GAGGA), 151 to 156 (NRTMSR), and Ile-212. Shikimate is bound at residue Tyr-214. Gly-235 is a binding site for NADP(+).

Belongs to the shikimate dehydrogenase family. As to quaternary structure, homodimer.

The enzyme catalyses shikimate + NADP(+) = 3-dehydroshikimate + NADPH + H(+). It participates in metabolic intermediate biosynthesis; chorismate biosynthesis; chorismate from D-erythrose 4-phosphate and phosphoenolpyruvate: step 4/7. Involved in the biosynthesis of the chorismate, which leads to the biosynthesis of aromatic amino acids. Catalyzes the reversible NADPH linked reduction of 3-dehydroshikimate (DHSA) to yield shikimate (SA). The chain is Shikimate dehydrogenase (NADP(+)) from Staphylococcus epidermidis (strain ATCC 12228 / FDA PCI 1200).